Consider the following 335-residue polypeptide: Glycerol-3-phosphate dehydrogenase [NAD(P)+] (335 aa).

NADPH contacts are provided by serine 10, phenylalanine 11, arginine 31, and lysine 105. Lysine 105, glycine 136, and serine 138 together coordinate sn-glycerol 3-phosphate. Alanine 140 serves as a coordination point for NADPH. 5 residues coordinate sn-glycerol 3-phosphate: lysine 191, aspartate 244, serine 254, arginine 255, and asparagine 256. Catalysis depends on lysine 191, which acts as the Proton acceptor. Arginine 255 is a binding site for NADPH. NADPH-binding residues include valine 279 and glutamate 281.

It belongs to the NAD-dependent glycerol-3-phosphate dehydrogenase family.

Its subcellular location is the cytoplasm. It catalyses the reaction sn-glycerol 3-phosphate + NAD(+) = dihydroxyacetone phosphate + NADH + H(+). It carries out the reaction sn-glycerol 3-phosphate + NADP(+) = dihydroxyacetone phosphate + NADPH + H(+). It functions in the pathway membrane lipid metabolism; glycerophospholipid metabolism. In terms of biological role, catalyzes the reduction of the glycolytic intermediate dihydroxyacetone phosphate (DHAP) to sn-glycerol 3-phosphate (G3P), the key precursor for phospholipid synthesis. The protein is Glycerol-3-phosphate dehydrogenase [NAD(P)+] of Leptospira interrogans serogroup Icterohaemorrhagiae serovar copenhageni (strain Fiocruz L1-130).